A 708-amino-acid chain; its full sequence is Quinohemoprotein alcohol dehydrogenase (708 aa).

Residues 1 to 31 form the signal peptide; that stretch reads MERLIDNSHGWPGRMVWLLAACLGSAAAFAQ. Glu-101 is a pyrroloquinoline quinone binding site. Cys-147 and Cys-148 are joined by a disulfide. Pyrroloquinoline quinone-binding positions include Arg-153, Thr-198, and 214–215; that span reads GA. Glu-216 contacts Ca(2+). Thr-274 is a pyrroloquinoline quinone binding site. Asn-294 and Asp-339 together coordinate Ca(2+). Residue Asp-339 is the Proton acceptor of the active site. Residues Lys-366, 425 to 426, and Val-575 contribute to the pyrroloquinoline quinone site; that span reads NW. The Cytochrome c domain maps to 619-708; it reads YDPAKVEAGT…GTADAIRPKP (90 aa). Heme c contacts are provided by Cys-635, Cys-638, His-639, and Met-678.

It belongs to the bacterial PQQ dehydrogenase family. Monomer. Pyrroloquinoline quinone is required as a cofactor. It depends on Ca(2+) as a cofactor. Heme c serves as cofactor. In terms of processing, in the crystallographic structures Trp-543 is oxidized to 2'-hydroxytryptophan.

It is found in the periplasm. It carries out the reaction 2 oxidized [azurin] + a primary alcohol = 2 reduced [azurin] + an aldehyde + 2 H(+). In terms of biological role, catalyzes the dye-linked oxidation of primary alcohols to the corresponding aldehydes and the (subsequent) oxidation of the aldehydes to carboxylic acids. Methanol is not a substrate. This chain is Quinohemoprotein alcohol dehydrogenase, found in Comamonas testosteroni (Pseudomonas testosteroni).